Here is a 554-residue protein sequence, read N- to C-terminus: Glucose-binding protein GlcS (554 aa).

The Cytoplasmic portion of the chain corresponds to 1 to 17 (MKRKYPYSLAKGLTSTQ). A helical transmembrane segment spans residues 18–38 (IAVIVAVIVIVIIIGVVAGFV). At 39–525 (LTKGPSTTAV…YGLTNNTQKT (487 aa)) the chain is on the extracellular side. The helical transmembrane segment at 526-546 (SNSVMLFLLPFLALPLAIASI) threads the bilayer. Topologically, residues 547 to 554 (DNKYYLLK) are cytoplasmic.

It belongs to the bacterial solute-binding protein 1 family. In terms of assembly, the complex is composed of two ATP-binding proteins (GlcV), two transmembrane proteins (GlcT and GlcU) and a solute-binding protein (GlcS).

It is found in the cell membrane. With respect to regulation, binding of glucose is strongly inhibited by galactose and mannose. Its function is as follows. Part of the ABC transporter complex GlcSTUV involved in glucose uptake. Binds glucose. Can also bind galactose and mannose. The protein is Glucose-binding protein GlcS of Saccharolobus solfataricus (strain ATCC 35092 / DSM 1617 / JCM 11322 / P2) (Sulfolobus solfataricus).